A 138-amino-acid polypeptide reads, in one-letter code: Large ribosomal subunit protein uL16 (138 aa).

Basic residues predominate over residues 1–13 (MLQPARRKYRKEQ). Positions 1 to 22 (MLQPARRKYRKEQKGRNTGIAT) are disordered.

It belongs to the universal ribosomal protein uL16 family. In terms of assembly, part of the 50S ribosomal subunit.

Binds 23S rRNA and is also seen to make contacts with the A and possibly P site tRNAs. This chain is Large ribosomal subunit protein uL16, found in Delftia acidovorans (strain DSM 14801 / SPH-1).